An 87-amino-acid chain; its full sequence is Small ribosomal subunit protein uS15 (87 aa).

Belongs to the universal ribosomal protein uS15 family. Part of the 30S ribosomal subunit. Forms a bridge to the 50S subunit in the 70S ribosome, contacting the 23S rRNA.

One of the primary rRNA binding proteins, it binds directly to 16S rRNA where it helps nucleate assembly of the platform of the 30S subunit by binding and bridging several RNA helices of the 16S rRNA. Its function is as follows. Forms an intersubunit bridge (bridge B4) with the 23S rRNA of the 50S subunit in the ribosome. This is Small ribosomal subunit protein uS15 from Clostridium kluyveri (strain NBRC 12016).